The chain runs to 359 residues: Nicotinate-nucleotide--dimethylbenzimidazole phosphoribosyltransferase (359 aa).

The active-site Proton acceptor is glutamate 318.

Belongs to the CobT family. In terms of assembly, homodimer.

The enzyme catalyses 5,6-dimethylbenzimidazole + nicotinate beta-D-ribonucleotide = alpha-ribazole 5'-phosphate + nicotinate + H(+). It participates in nucleoside biosynthesis; alpha-ribazole biosynthesis; alpha-ribazole from 5,6-dimethylbenzimidazole: step 1/2. Functionally, catalyzes the synthesis of alpha-ribazole-5'-phosphate from nicotinate mononucleotide (NAMN) and 5,6-dimethylbenzimidazole (DMB). The chain is Nicotinate-nucleotide--dimethylbenzimidazole phosphoribosyltransferase from Escherichia coli O8 (strain IAI1).